Consider the following 80-residue polypeptide: Progonadoliberin-1 (80 aa).

Positions 1–21 are cleaved as a signal peptide; sequence MGIKRALWWMVVCVVVLQVSA. A Pyrrolidone carboxylic acid modification is found at glutamine 22. Glycine 31 carries the glycine amide modification.

It belongs to the GnRH family.

The protein localises to the secreted. Its function is as follows. Stimulates the secretion of gonadotropins. The polypeptide is Progonadoliberin-1 (gnrh1) (Clarias gariepinus (North African catfish)).